The sequence spans 72 residues: UPF0337 protein bsl2407 (72 aa).

Positions 1-55 (MGSTTDKIKGNANEAIGKAKQGIGEATGSDRLKGEGVVQEVKGKGQQAMGDAKDA) are disordered. The span at 35–47 (EGVVQEVKGKGQQ) shows a compositional bias: low complexity.

The protein belongs to the UPF0337 (CsbD) family.

The chain is UPF0337 protein bsl2407 from Bradyrhizobium diazoefficiens (strain JCM 10833 / BCRC 13528 / IAM 13628 / NBRC 14792 / USDA 110).